The primary structure comprises 573 residues: Myrcene synthase TPS5FN (573 aa).

Arg286, Asp323, Asp327, Arg464, and Asp467 together coordinate (2E)-geranyl diphosphate. Mg(2+) is bound by residues Asp323 and Asp327. Residues 323-327 carry the DDXXD motif motif; sequence DDIFD. Residues Asp467, Thr471, and Glu475 each contribute to the Mg(2+) site.

The protein belongs to the terpene synthase family. Tpsb subfamily. Mg(2+) serves as cofactor. The cofactor is Mn(2+). Expressed in glandular trichomes two to four weeks after flowering onset.

It catalyses the reaction (2E)-geranyl diphosphate = beta-myrcene + diphosphate. The catalysed reaction is (2E)-geranyl diphosphate = (1R,5R)-alpha-pinene + diphosphate. It carries out the reaction (2E)-geranyl diphosphate = sabinene + diphosphate. The enzyme catalyses (2E)-geranyl diphosphate = (4S)-limonene + diphosphate. It catalyses the reaction (2E)-geranyl diphosphate = terpinolene + diphosphate. The catalysed reaction is (2E)-geranyl diphosphate = camphene + diphosphate. It participates in secondary metabolite biosynthesis; terpenoid biosynthesis. Functionally, involved in monoterpene (C10) olefins biosynthesis, constituants of cannabinoids and terpenoids-rich resins. Catalyzes mainly the conversion of (2E)-geranyl diphosphate to beta-myrcene, and also produces minor products such as alpha-pinene, camphene, sabinene, limonene and terpinolene. This is Myrcene synthase TPS5FN from Cannabis sativa (Hemp).